The primary structure comprises 429 residues: Gamma-glutamyl phosphate reductase (429 aa).

This sequence belongs to the gamma-glutamyl phosphate reductase family.

It is found in the cytoplasm. It carries out the reaction L-glutamate 5-semialdehyde + phosphate + NADP(+) = L-glutamyl 5-phosphate + NADPH + H(+). It functions in the pathway amino-acid biosynthesis; L-proline biosynthesis; L-glutamate 5-semialdehyde from L-glutamate: step 2/2. Functionally, catalyzes the NADPH-dependent reduction of L-glutamate 5-phosphate into L-glutamate 5-semialdehyde and phosphate. The product spontaneously undergoes cyclization to form 1-pyrroline-5-carboxylate. The polypeptide is Gamma-glutamyl phosphate reductase (Rhizorhabdus wittichii (strain DSM 6014 / CCUG 31198 / JCM 15750 / NBRC 105917 / EY 4224 / RW1) (Sphingomonas wittichii)).